Here is a 132-residue protein sequence, read N- to C-terminus: Salivary protein 15 Iper-2 (132 aa).

The signal sequence occupies residues 1–18 (MKVVCIIVLFVIVAVNES). N-linked (GlcNAc...) asparagine glycosylation is found at N24, N36, N62, N89, and N101. The tract at residues 113–132 (GPNGQTCADKSQCVGHIPGC) is CD4-binding.

This sequence belongs to the salp15 family. As to quaternary structure, interacts with host CD4. Interacts with host DC-SIGN (CD209). In terms of assembly, (Microbial infection) Interacts with Borrelia outer surface protein C (OspC). As to expression, expressed in salivary glands from feeding female ticks. Highly expressed 1 day after start of feeding, and weakly expressed at the initiation of feeding and 4 days after start of feeding.

The protein localises to the secreted. Salivary tick protein that downregulates host immune system by binding to both dendritic cells, and CD4(+) T cells. Specifically binds to the CD4 coreceptor on T cells. This interaction prevents the activation of the Src kinase, Lck, and its downstream substrate Zap-70, and results in deficient activation of PLCgamma1, the repression of calcium fluxes triggered by T-cell antigen receptor (TCR) ligation, and a subsequent reduction in interleukin-2 production. This salivary protein also binds to DC-SIGN (CD209) on dendritic cells (DC) and activates the Raf-1 kinase/MEK signaling pathway that results in down-regulating expression of pro-inflammatory cytokines. Furthermore, it inhibits T cell proliferation induced by DCs. It also inhibits in vitro keratinocyte inflammation induced by Borrelia burgdorferi or by the major outer surface protein (OspC) of Borrelia. In addition, it downregulates chemokines and monocyte chemoattractant protein 1, as well as several antimicrobial peptides such as defensins, cathelicidin, psoriasin, and RNase 7. Apart from its immunomodulatory activities, it is also associated with protection of Borrelia spirochetes from antibody-mediated killing through its binding to OspC. In vivo, tests on different immune disease animal models show promising therapeutic results, e.g., in inhibiting HIV infection, experimental autoimmune encephalomyelitis, transplantation rejection, and asthma. Its function is as follows. (Microbial infection) Protects Borrelia garinii from anti-Borrelia antibody-mediated cytotoxicity in vitro. May facilitate B.garinii transmission in mouse model. In terms of biological role, (Microbial infection) Protects Borrelia burgdorferi from anti-Borrelia antibody-mediated cytotoxicity in vitro. Functionally, (Microbial infection) Protects Borrelia afzelii from anti-Borrelia antibody-mediated cytotoxicity in vitro. In Ixodes persulcatus (Taiga tick), this protein is Salivary protein 15 Iper-2.